The chain runs to 590 residues: Cell division protein FtsZ 1 (590 aa).

GTP-binding positions include 24 to 28 (GGGGN), 111 to 113 (GTG), Glu142, Arg146, and Asp190. Disordered stretches follow at residues 346 to 372 (AAVP…QPLQ) and 524 to 590 (EATN…RQSS). The segment covering 534-546 (AAAPSAASQQRRP) has biased composition (low complexity). A compositionally biased stretch (basic and acidic residues) spans 559–576 (GQLDDHGRAAPQMRSHED).

Belongs to the FtsZ family. In terms of assembly, homodimer. Polymerizes to form a dynamic ring structure in a strictly GTP-dependent manner. Interacts directly with several other division proteins.

It localises to the cytoplasm. Essential cell division protein that forms a contractile ring structure (Z ring) at the future cell division site. The regulation of the ring assembly controls the timing and the location of cell division. One of the functions of the FtsZ ring is to recruit other cell division proteins to the septum to produce a new cell wall between the dividing cells. Binds GTP and shows GTPase activity. The chain is Cell division protein FtsZ 1 from Rhizobium meliloti (strain 1021) (Ensifer meliloti).